Reading from the N-terminus, the 243-residue chain is ATP synthase subunit a (243 aa).

A run of 8 helical transmembrane segments spans residues 28–48 (SSLY…AGVF), 52–72 (VIPG…LGII), 83–103 (YFPL…VGML), 114–134 (HIVV…LIGL), 141–161 (FFAM…MIFL), 177–197 (LTAN…FVYP), 200–220 (LLIS…EVFI), and 221–241 (AMLQ…DSLF).

Belongs to the ATPase A chain family. In terms of assembly, F-type ATPases have 2 components, CF(1) - the catalytic core - and CF(0) - the membrane proton channel. CF(1) has five subunits: alpha(3), beta(3), gamma(1), delta(1), epsilon(1). CF(0) has three main subunits: a(1), b(2) and c(9-12). The alpha and beta chains form an alternating ring which encloses part of the gamma chain. CF(1) is attached to CF(0) by a central stalk formed by the gamma and epsilon chains, while a peripheral stalk is formed by the delta and b chains.

The protein localises to the cell inner membrane. Its function is as follows. Key component of the proton channel; it plays a direct role in the translocation of protons across the membrane. This chain is ATP synthase subunit a, found in Neorickettsia sennetsu (strain ATCC VR-367 / Miyayama) (Ehrlichia sennetsu).